We begin with the raw amino-acid sequence, 273 residues long: Undecaprenyl-diphosphatase (273 aa).

Helical transmembrane passes span 6-26 (SLLVAAILGVVEGLTEFLPVS), 45-65 (AKTFEVVIQLGSILAVVVMFW), 90-110 (LTLIHILLGMIPAVVLGLLFH), 116-136 (LFNPINVMYALVVGGLLLIAA), 190-210 (YAASEFSFLLAVPMMMGATAL), 222-242 (GDIPMFAVGFITAFVVALVAI), and 252-272 (ISFIPFAIYRFIVAAAVYVVF).

This sequence belongs to the UppP family.

The protein resides in the cell inner membrane. It catalyses the reaction di-trans,octa-cis-undecaprenyl diphosphate + H2O = di-trans,octa-cis-undecaprenyl phosphate + phosphate + H(+). Catalyzes the dephosphorylation of undecaprenyl diphosphate (UPP). Confers resistance to bacitracin. In Escherichia fergusonii (strain ATCC 35469 / DSM 13698 / CCUG 18766 / IAM 14443 / JCM 21226 / LMG 7866 / NBRC 102419 / NCTC 12128 / CDC 0568-73), this protein is Undecaprenyl-diphosphatase.